The chain runs to 116 residues: MSFCSFFGGEVFQNHFEPGVYVCAKCGYELFSSRSKYAHSSPWPAFTETIHEDSVAKCPEKNRPEALKVSCGKCGNGLGHEFLNDGPKRGQSRFUIFSSSLKFIPKGKEAPASQGD.

A MsrB domain is found at 1–106 (MSFCSFFGGE…FSSSLKFIPK (106 aa)). Cys23, Cys26, Cys71, and Cys74 together coordinate Zn(2+). The active-site Nucleophile is the Sec95. Residue Sec95 is a non-standard amino acid, selenocysteine.

The protein belongs to the MsrB Met sulfoxide reductase family. Requires Zn(2+) as cofactor. Truncated MSRB1/SEPX1 proteins produced by failed UGA/Sec decoding are ubiquitinated by the CRL2(FEM1C) E3 ubiquitin-protein ligase complex.

The protein localises to the cytoplasm. It localises to the nucleus. Its subcellular location is the cytoskeleton. It catalyses the reaction L-methionyl-[protein] + [thioredoxin]-disulfide + H2O = L-methionyl-(R)-S-oxide-[protein] + [thioredoxin]-dithiol. It carries out the reaction [thioredoxin]-disulfide + L-methionine + H2O = L-methionine (R)-S-oxide + [thioredoxin]-dithiol. Methionine-sulfoxide reductase that specifically reduces methionine (R)-sulfoxide back to methionine. While in many cases, methionine oxidation is the result of random oxidation following oxidative stress, methionine oxidation is also a post-translational modification that takes place on specific residue. Acts as a regulator of actin assembly by reducing methionine (R)-sulfoxide mediated by MICALs (MICAL1, MICAL2 or MICAL3) on actin, thereby promoting filament repolymerization. Plays a role in innate immunity by reducing oxidized actin, leading to actin repolymerization in macrophages. This chain is Methionine-R-sulfoxide reductase B1 (Msrb1), found in Rattus norvegicus (Rat).